Consider the following 249-residue polypeptide: MADS-box transcription factor 18 (249 aa).

The MADS-box domain occupies 1 to 61 (MGRGPVQLRR…GKLYEFSSHS (61 aa)). Positions 88–179 (QENWGDEYGI…KLMETEKEKN (92 aa)) constitute a K-box domain. The tract at residues 184–249 (NTNREEQNGA…PPWMLRTSHT (66 aa)) is disordered. Positions 210–236 (PTTNNSQSQPRGSGESEAQPSPAQAGN) are enriched in polar residues.

Widely expressed. Transcripts accumulate to higher levels in organs that retain meristematic characteristics: in the apical meristem and in the meristematic leaf primordia formed on its flank; in the developing panicle at the early stage of rachis-branch primordia differentiation; in the procambium of the rachis branches and in all floral organ primordia.

It localises to the nucleus. Probable transcription factor. In Oryza sativa subsp. indica (Rice), this protein is MADS-box transcription factor 18 (MADS18).